A 494-amino-acid chain; its full sequence is Cytochrome P450 2A11 (494 aa).

The residue at position 379 (K379) is an N6-acetyllysine. C439 is a binding site for heme.

The protein belongs to the cytochrome P450 family. It depends on heme as a cofactor. As to expression, expressed in liver and lung as well as in nasal tissues.

Its subcellular location is the endoplasmic reticulum membrane. The protein resides in the microsome membrane. The enzyme catalyses an organic molecule + reduced [NADPH--hemoprotein reductase] + O2 = an alcohol + oxidized [NADPH--hemoprotein reductase] + H2O + H(+). Functionally, catalyzes the oxygenation of a variety of substrates, including ethanol and procarcinogens such as N-nitrosodiethylamine and phenacetin. Has no or little activity as a coumarin 7-hydroxylase and in the formation of androstenedione from testosterone. The sequence is that of Cytochrome P450 2A11 (CYP2A11) from Oryctolagus cuniculus (Rabbit).